Reading from the N-terminus, the 714-residue chain is Macrophage-expressed gene 1 protein (714 aa).

An N-terminal signal peptide occupies residues 1–19 (MNSFMAIALIWMMIACAEA). In terms of domain architecture, MACPF spans 30-345 (GFQTCKDTLK…TAVRHYYTFN (316 aa)). A disulfide bridge links cysteine 34 with cysteine 70. The next 2 membrane-spanning stretches (beta stranded) occupy residues 113–120 (FSINTELS) and 127–132 (GKFSTE). Asparagine 185 carries N-linked (GlcNAc...) asparagine glycosylation. Transmembrane regions (beta stranded) follow at residues 235-244 (TVTASAGIAF) and 248-256 (VNFKVETDH). Residue asparagine 269 is glycosylated (N-linked (GlcNAc...) asparagine). The cysteines at positions 350 and 369 are disulfide-linked. Asparagine 375 carries N-linked (GlcNAc...) asparagine glycosylation. 5 disulfides stabilise this stretch: cysteine 385–cysteine 394, cysteine 432–cysteine 446, cysteine 436–cysteine 442, cysteine 531–cysteine 569, and cysteine 554–cysteine 574. The tract at residues 410–653 (PSGYTPVHLL…GDGNGMSGGE (244 aa)) is P2. The helical transmembrane segment at 654–674 (AAGVTLGVIIALGIVITLAIY) threads the bilayer. The disordered stretch occupies residues 690-714 (EQESLVGSFATDASPPNGEQDPCPA).

It belongs to the MPEG1 family. Homooligomer; predominantly forms a homooligomeric arc-shaped pore complex instead of complete rings of 16 subunits. In terms of processing, proteolytically processed in two steps to generate the Macrophage-expressed gene 1 protein, processed form: cleaved by trypsin in proximity of the helical transmembrane domain releases the ectodomain into the lysosomal lumen to orient the pore-forming domain toward the endogenous membranes, and processed by the asparagine endopeptidase (LGMN). Proteolytic processing in antigen-containing vesicles is pH-dependent. Monoubiquitinated in response to bacterial infection; ubiquitination is required for vesicular localization and antibacterial activity and can be blocked by bacterial cell cycle inhibiting factor (cif).

Its subcellular location is the cytoplasmic vesicle membrane. The protein localises to the cytoplasmic vesicle. It is found in the phagosome membrane. Forms arc- and ring-shaped pre-pores on top of the membrane at neutral to slightly acidic pH conditions and converts to pores upon acidification. Undergoes transition from the pre-pore to the pore in a processive clockwise hand-over-hand process. In the pore state, 2 alpha-helical regions refold into transmembrane hairpins (TMH1 and TMH2) in each protomer that form in the ensemble complex giant beta-barrel transmembrane pores. In terms of biological role, pore-forming protein involved in both innate and adaptive immunity. Plays a central role in antigen cross-presentation in dendritic cells by forming a pore in antigen-containing compartments, thereby promoting delivery of antigens for cross-presentation. Also involved in innate immune response following bacterial infection; shows antibacterial activity against a wide spectrum of Gram-positive, Gram-negative and acid-fast bacteria. Reduces the viability of the intracytosolic pathogen L.monocytogenes by inhibiting acidification of the phagocytic vacuole of host cells which restricts bacterial translocation from the vacuole to the cytosol. Required for the antibacterial activity of reactive oxygen species and nitric oxide. Its function is as follows. Pore-forming protein that plays a central role in antigen cross-presentation in dendritic cells by mediating delivery of antigens for cross-presentation. Dendritic cells bridge innate and adaptive immunity by capturing exogenous antigens on MHC class-I molecules and presenting them to naive CD8(+) T-cells. Acts by forming a pore in antigen-containing compartments, promoting the release of antigens into the cytosol, enabling generation of MHCI:peptide complexes and T-cell priming. The polypeptide is Macrophage-expressed gene 1 protein (Mpeg1) (Rattus norvegicus (Rat)).